Here is a 256-residue protein sequence, read N- to C-terminus: Ubiquinone/menaquinone biosynthesis C-methyltransferase UbiE (256 aa).

S-adenosyl-L-methionine-binding positions include T79, D100, and 128–129 (DA).

This sequence belongs to the class I-like SAM-binding methyltransferase superfamily. MenG/UbiE family.

The catalysed reaction is a 2-demethylmenaquinol + S-adenosyl-L-methionine = a menaquinol + S-adenosyl-L-homocysteine + H(+). It catalyses the reaction a 2-methoxy-6-(all-trans-polyprenyl)benzene-1,4-diol + S-adenosyl-L-methionine = a 5-methoxy-2-methyl-3-(all-trans-polyprenyl)benzene-1,4-diol + S-adenosyl-L-homocysteine + H(+). It participates in quinol/quinone metabolism; menaquinone biosynthesis; menaquinol from 1,4-dihydroxy-2-naphthoate: step 2/2. Its pathway is cofactor biosynthesis; ubiquinone biosynthesis. Methyltransferase required for the conversion of demethylmenaquinol (DMKH2) to menaquinol (MKH2) and the conversion of 2-polyprenyl-6-methoxy-1,4-benzoquinol (DDMQH2) to 2-polyprenyl-3-methyl-6-methoxy-1,4-benzoquinol (DMQH2). The sequence is that of Ubiquinone/menaquinone biosynthesis C-methyltransferase UbiE from Pseudomonas fluorescens (strain SBW25).